The primary structure comprises 49 residues: Large ribosomal subunit protein bL33A (49 aa).

This sequence belongs to the bacterial ribosomal protein bL33 family.

This Levilactobacillus brevis (strain ATCC 367 / BCRC 12310 / CIP 105137 / JCM 1170 / LMG 11437 / NCIMB 947 / NCTC 947) (Lactobacillus brevis) protein is Large ribosomal subunit protein bL33A.